The following is a 355-amino-acid chain: Fructose-bisphosphate aldolase, cytoplasmic isozyme (355 aa).

R52 and K142 together coordinate substrate. E183 functions as the Proton acceptor in the catalytic mechanism. K225 serves as the catalytic Schiff-base intermediate with dihydroxyacetone-P.

It belongs to the class I fructose-bisphosphate aldolase family.

It is found in the cytoplasm. It catalyses the reaction beta-D-fructose 1,6-bisphosphate = D-glyceraldehyde 3-phosphate + dihydroxyacetone phosphate. It functions in the pathway carbohydrate degradation; glycolysis; D-glyceraldehyde 3-phosphate and glycerone phosphate from D-glucose: step 4/4. The sequence is that of Fructose-bisphosphate aldolase, cytoplasmic isozyme from Zea mays (Maize).